The sequence spans 100 residues: Replication restart protein PriB (100 aa).

In terms of domain architecture, SSB spans 4 to 99 (TNLVSLAALI…LRIQNIKEYK (96 aa)).

The protein belongs to the PriB family. As to quaternary structure, homodimer. Component of the replication restart primosome. Primosome assembly occurs via a 'hand-off' mechanism. PriA binds to replication forks, subsequently PriB then DnaT bind; DnaT then displaces ssDNA to generate the helicase loading substrate. Interacts with PriA with high affinity, independent of DNA presence.

Its activity is regulated as follows. PriA:PriB complex-catalyzed duplex DNA winding is inhibited by CGS 15943 (CHEBI:131351); PriA is the drug target. In terms of biological role, stimulates the DNA unwinding activity of PriA helicase, which does not seem to require single-stranded (ss)DNA-binding by PriB. Activates DNA-dependent ATP hydrolysis catalyzed by PriA. Weakly binds ssDNA. Weakly binds double-stranded (ds)DNA, a partial duplex DNA with a 3' ssDNA overhang, and a forked DNA structure with fully duplex leading and lagging strand arms in vitro. Functionally, involved in the restart of stalled replication forks, which reloads the replicative helicase on sites other than the origin of replication; the PriA-PriB pathway is the major replication restart pathway. During primosome assembly it facilitates complex formation between PriA and DnaT on DNA; stabilizes PriA on DNA. Stimulates the DNA unwinding activity of PriA helicase. The sequence is that of Replication restart protein PriB from Neisseria gonorrhoeae (strain ATCC 700825 / FA 1090).